The primary structure comprises 359 residues: Phosphate acyltransferase (359 aa).

Belongs to the PlsX family. In terms of assembly, homodimer. Probably interacts with PlsY.

Its subcellular location is the cytoplasm. The catalysed reaction is a fatty acyl-[ACP] + phosphate = an acyl phosphate + holo-[ACP]. Its pathway is lipid metabolism; phospholipid metabolism. Catalyzes the reversible formation of acyl-phosphate (acyl-PO(4)) from acyl-[acyl-carrier-protein] (acyl-ACP). This enzyme utilizes acyl-ACP as fatty acyl donor, but not acyl-CoA. The chain is Phosphate acyltransferase from Citrobacter koseri (strain ATCC BAA-895 / CDC 4225-83 / SGSC4696).